The primary structure comprises 288 residues: Protoheme IX farnesyltransferase 2 (288 aa).

A run of 8 helical transmembrane segments spans residues Ile-16–Pro-36, Phe-38–Phe-58, Leu-88–Ala-108, Trp-111–Leu-131, Ile-139–Pro-159, Leu-166–Ala-186, Ala-227–Leu-247, and Phe-266–Leu-286.

Belongs to the UbiA prenyltransferase family. Protoheme IX farnesyltransferase subfamily.

It is found in the cell inner membrane. It carries out the reaction heme b + (2E,6E)-farnesyl diphosphate + H2O = Fe(II)-heme o + diphosphate. Its pathway is porphyrin-containing compound metabolism; heme O biosynthesis; heme O from protoheme: step 1/1. Its function is as follows. Converts heme B (protoheme IX) to heme O by substitution of the vinyl group on carbon 2 of heme B porphyrin ring with a hydroxyethyl farnesyl side group. This chain is Protoheme IX farnesyltransferase 2, found in Paramagnetospirillum magneticum (strain ATCC 700264 / AMB-1) (Magnetospirillum magneticum).